A 529-amino-acid polypeptide reads, in one-letter code: Tyrosinase (529 aa).

An N-terminal signal peptide occupies residues 1-18 (MLLAALCCLLWSFRTSAG). Residues 19-472 (HFPRACASSK…IKPFLEQASR (454 aa)) lie on the Lumenal side of the membrane. N-linked (GlcNAc...) asparagine glycosylation is found at Asn-86, Asn-111, and Asn-161. Cu cation-binding residues include His-180, His-202, and His-211. Asn-230 and Asn-336 each carry an N-linked (GlcNAc...) asparagine glycan. Cu cation-binding residues include His-362 and His-366. The N-linked (GlcNAc...) asparagine glycan is linked to Asn-370. His-389 provides a ligand contact to Cu cation. Residues 473–495 (IWPWLIGAAVVGSVLTAVLGRLT) form a helical membrane-spanning segment. Residues 496-529 (SLLCRRKRKQLREERQPLLMEKEDYHSLLYQTHV) are Cytoplasmic-facing.

The protein belongs to the tyrosinase family. As to quaternary structure, forms an OPN3-dependent complex with DCT in response to blue light in melanocytes. Cu(2+) serves as cofactor. In terms of processing, glycosylated.

It localises to the melanosome membrane. The protein resides in the melanosome. The enzyme catalyses 2 L-dopa + O2 = 2 L-dopaquinone + 2 H2O. It carries out the reaction L-tyrosine + O2 = L-dopaquinone + H2O. The catalysed reaction is 2 5,6-dihydroxyindole-2-carboxylate + O2 = 2 indole-5,6-quinone-2-carboxylate + 2 H2O. In terms of biological role, this is a copper-containing oxidase that functions in the formation of pigments such as melanins and other polyphenolic compounds. Catalyzes the initial and rate limiting step in the cascade of reactions leading to melanin production from tyrosine. In addition to hydroxylating tyrosine to DOPA (3,4-dihydroxyphenylalanine), also catalyzes the oxidation of DOPA to DOPA-quinone, and possibly the oxidation of DHI (5,6-dihydroxyindole) to indole-5,6 quinone. This is Tyrosinase (TYR) from Felis catus (Cat).